A 417-amino-acid chain; its full sequence is Acid phosphatase (417 aa).

Positions 1-19 (MFTKQSLVTLLGGLSLAVA) are cleaved as a signal peptide. Residues Asn122, Asn187, and Asn209 are each glycosylated (N-linked (GlcNAc...) asparagine). The Proton donor role is filled by Asp216. 3 N-linked (GlcNAc...) asparagine glycosylation sites follow: Asn218, Asn333, and Asn383.

The N-terminus is blocked.

It localises to the secreted. It carries out the reaction a phosphate monoester + H2O = an alcohol + phosphate. The chain is Acid phosphatase (phoA) from Aspergillus niger.